The following is a 485-amino-acid chain: Glutamyl-tRNA(Gln) amidotransferase subunit A (485 aa).

Residues Lys-79 and Ser-154 each act as charge relay system in the active site. Ser-178 acts as the Acyl-ester intermediate in catalysis.

The protein belongs to the amidase family. GatA subfamily. Heterotrimer of A, B and C subunits.

The enzyme catalyses L-glutamyl-tRNA(Gln) + L-glutamine + ATP + H2O = L-glutaminyl-tRNA(Gln) + L-glutamate + ADP + phosphate + H(+). Functionally, allows the formation of correctly charged Gln-tRNA(Gln) through the transamidation of misacylated Glu-tRNA(Gln) in organisms which lack glutaminyl-tRNA synthetase. The reaction takes place in the presence of glutamine and ATP through an activated gamma-phospho-Glu-tRNA(Gln). The chain is Glutamyl-tRNA(Gln) amidotransferase subunit A from Staphylococcus aureus.